Reading from the N-terminus, the 147-residue chain is MMNILLINGPNLNLLGTREPEIYGNKTLSDIEKDLTKVAKEKSINLECFQSNHEGEIVDKIQESVKSIQGILINAGAFTHTSISIRDALIGSKIPFVELHISNIFSREDFRKESFLTDKAIGIISGFGISSYSLALEGIIGYLSIKD.

The active-site Proton acceptor is Tyr23. Asn74, His80, and Asp87 together coordinate substrate. The active-site Proton donor is His100. Substrate-binding positions include 101–102 (IS) and Arg111.

Belongs to the type-II 3-dehydroquinase family. In terms of assembly, homododecamer.

The enzyme catalyses 3-dehydroquinate = 3-dehydroshikimate + H2O. The protein operates within metabolic intermediate biosynthesis; chorismate biosynthesis; chorismate from D-erythrose 4-phosphate and phosphoenolpyruvate: step 3/7. Its function is as follows. Catalyzes a trans-dehydration via an enolate intermediate. This Prochlorococcus marinus (strain MIT 9301) protein is 3-dehydroquinate dehydratase.